Here is a 248-residue protein sequence, read N- to C-terminus: Probable transcriptional regulatory protein FTL_0929 (248 aa).

Belongs to the TACO1 family.

It localises to the cytoplasm. This chain is Probable transcriptional regulatory protein FTL_0929, found in Francisella tularensis subsp. holarctica (strain LVS).